A 504-amino-acid chain; its full sequence is Lysine--tRNA ligase (504 aa).

Mg(2+) contacts are provided by Glu414 and Glu421.

Belongs to the class-II aminoacyl-tRNA synthetase family. Homodimer. Requires Mg(2+) as cofactor.

Its subcellular location is the cytoplasm. It carries out the reaction tRNA(Lys) + L-lysine + ATP = L-lysyl-tRNA(Lys) + AMP + diphosphate. The polypeptide is Lysine--tRNA ligase (Photorhabdus laumondii subsp. laumondii (strain DSM 15139 / CIP 105565 / TT01) (Photorhabdus luminescens subsp. laumondii)).